A 2498-amino-acid chain; its full sequence is Nuclear receptor corepressor 1 (2498 aa).

Disordered regions lie at residues 1–38, 54–84, 134–169, and 198–223; these read MSSS…QQEY, IQQQ…SGYD, SEVK…SKLS, and QQQL…VEQK. Basic and acidic residues-rich tracts occupy residues 71–82, 134–148, and 204–213; these read PVSDRPQDRRSG, SEVK…KHES, and EAAKPPEPEK. The segment at 154 to 304 is interaction with tbl1xr1-A; that stretch reads SGQPGDDQDA…REQNICQRYD (151 aa). Residues 168 to 208 adopt a coiled-coil conformation; that stretch reads LSKEELIQSMDRVDREIAKVEQQILKLKKKQQQLEEEAAKP. The region spanning 427-478 is the SANT 1 domain; the sequence is QFMNVWTDHEKEIFKEKFVRHPKNFGLIASYLERKNVSDCVLYYYLTKKNEN. A compositionally biased stretch (basic residues) spans 483–493; it reads VRRNYPKRRGR. Disordered regions lie at residues 483–649, 668–912, 1075–1122, 1417–1436, 1470–1583, 1737–1851, and 1916–1990; these read VRRN…GSKS, NLLQ…FGSR, SLSD…GTPG, DLVS…IMEG, SWGV…QRES, PGTQ…AQES, and PQME…TAHT. Composition is skewed to basic and acidic residues over residues 502–525 and 535–548; these read SQEE…KEDE and KEEL…KIDA. Positions 502–552 form a coiled coil; that stretch reads SQEEKEIEKVEEEKADRNDKKEDERREEEEKEEKEELREGAKDKIDAVAED. The span at 582–611 shows a compositional bias: low complexity; sequence ASEAAAANAVTTATTAPVTTTSTATTVAPV. Residues 612–627 are compositionally biased toward pro residues; sequence PVAPPPEEPTPPPPPQ. An SANT 2 domain is found at 628–665; the sequence is EQSLVDHGRNWGAIAKMVGSKSESQCKNFYFNYKRRHN. Polar residues predominate over residues 689–699; the sequence is QCDSIASTVSA. Positions 700 to 719 are enriched in acidic residues; it reads QEDDENEASNEEENPEDSEG. Composition is skewed to low complexity over residues 727–738 and 761–774; these read ESAPSPSPAEAA and DAAS…SPSP. A compositionally biased stretch (basic and acidic residues) spans 854-863; it reads MERLMDRAEA. Polar residues-rich tracts occupy residues 872–891 and 1102–1122; these read QNIS…SATC and ATSS…GTPG. Over residues 1484-1501 the composition is skewed to basic and acidic residues; it reads KMGERSKHEDTKSSDAIR. Positions 1505 to 1516 are enriched in polar residues; that stretch reads TSVVSSGPSVLR. The span at 1545-1558 shows a compositional bias: low complexity; it reads PSPMSRSSPMARSA. Residues 1765–1804 adopt a coiled-coil conformation; sequence VSAERERERERERERDREREKEQRERESDRERERDRLAHA. The span at 1767-1802 shows a compositional bias: basic and acidic residues; it reads AERERERERERERDREREKEQRERESDRERERDRLA. 2 stretches are compositionally biased toward low complexity: residues 1803 to 1813 and 1820 to 1835; these read HAAAAAAAASA and RPVS…RPSS. Residues 1842–1851 show a composition bias toward polar residues; sequence PSPSVRAQES. The segment covering 1921 to 1942 has biased composition (basic and acidic residues); it reads AKPKESKNDSARSEENLSRRNA. Over residues 1958–1980 the composition is skewed to low complexity; the sequence is SPYTSSSFSSSKSQSQPSSAVYS. Residues 2012–2016 carry the CORNR box 1 motif; sequence IDVII. Residues 2022–2109 are disordered; the sequence is SDKDGRERNS…SPPQQTIPGH (88 aa). Residues 2031-2040 show a composition bias toward low complexity; that stretch reads SQSSDASSSH. Residues 2043 to 2052 are compositionally biased toward basic and acidic residues; that stretch reads HRYEAPRETI. The segment covering 2093–2106 has biased composition (polar residues); sequence RYRQQQESPPQQTI. A CORNR box 2 motif is present at residues 2123-2127; it reads ICHII. Positions 2136-2145 are enriched in low complexity; that stretch reads PVNQPLQQPP. The interval 2136–2222 is disordered; it reads PVNQPLQQPP…PISPPQAPML (87 aa). The span at 2146–2175 shows a compositional bias: polar residues; it reads ASTFQSTNPTSTAVRTKASSRFSPESQVQP. Basic and acidic residues predominate over residues 2190 to 2209; sequence IPDKPRGRPGKSPDRGHISE. The short motif at 2326–2330 is the CORNR box 3 element; sequence LEDII. Disordered stretches follow at residues 2344–2446 and 2464–2498; these read DHGV…YNPL and TSMT…DSDE. Over residues 2353 to 2362 the composition is skewed to polar residues; it reads QGNQSGTPNS. The segment covering 2380–2394 has biased composition (basic residues); the sequence is HKQKLISKYGSRKTK. Polar residues-rich tracts occupy residues 2464–2476 and 2489–2498; these read TSMT…QQSR and QYETLSDSDE.

It belongs to the N-CoR nuclear receptor corepressors family. As to quaternary structure, forms a large corepressor complex that contains sin3a/b, histone deacetylases hdac1 and hdac2, rbbp4 and possibly rbbp7. Interacts with the thyroid receptor (TR, composed of rxra and thrb) and the retinoid acid receptor (RAR, composed of rxra and rara) in the absence of ligand. Interacts with tbl1xr1-A and possibly tbl1xr1-B. Interacts with zbtb33/kaiso.

It is found in the nucleus. Its function is as follows. Mediates transcriptional repression by certain nuclear receptors. Participates in complexes which promote histone deacetylation and the formation of repressive chromatin structures which may impede access by the basal transcription machinery. In association with hdac3, may play a role in the regulation of the circadian clock. The protein is Nuclear receptor corepressor 1 (ncor1) of Xenopus laevis (African clawed frog).